A 457-amino-acid polypeptide reads, in one-letter code: tRNA modification GTPase MnmE (457 aa).

3 residues coordinate (6S)-5-formyl-5,6,7,8-tetrahydrofolate: Arg-25, Glu-87, and Arg-126. Residues 223 to 377 (GISTAIIGRP…IEERINNLFF (155 aa)) enclose the TrmE-type G domain. Asn-233 serves as a coordination point for K(+). Residues 233–238 (NVGKSS), 252–258 (TDIAGTT), and 277–280 (DTAG) contribute to the GTP site. Ser-237 is a Mg(2+) binding site. K(+)-binding residues include Thr-252, Ile-254, and Thr-257. Thr-258 is a binding site for Mg(2+). Position 457 (Lys-457) interacts with (6S)-5-formyl-5,6,7,8-tetrahydrofolate.

Belongs to the TRAFAC class TrmE-Era-EngA-EngB-Septin-like GTPase superfamily. TrmE GTPase family. Homodimer. Heterotetramer of two MnmE and two MnmG subunits. It depends on K(+) as a cofactor.

Its subcellular location is the cytoplasm. In terms of biological role, exhibits a very high intrinsic GTPase hydrolysis rate. Involved in the addition of a carboxymethylaminomethyl (cmnm) group at the wobble position (U34) of certain tRNAs, forming tRNA-cmnm(5)s(2)U34. This Streptococcus pneumoniae serotype 4 (strain ATCC BAA-334 / TIGR4) protein is tRNA modification GTPase MnmE.